An 829-amino-acid chain; its full sequence is Protein SEY1 (829 aa).

Topologically, residues 1–721 are cytoplasmic; the sequence is MNQTPQIAQD…KRSMVSSVAQ (721 aa). The GB1/RHD3-type G domain occupies 87 to 310; that stretch reads GFAYDVVAVF…REDYVFQPAY (224 aa). 97–104 provides a ligand contact to GTP; that stretch reads GSQSTGKS. A coiled-coil region spans residues 487–525; that stretch reads EYEHELALLDEDLKLIADKCRADETKKMVNAIERNVKRQ. Residues 722-742 traverse the membrane as a helical segment; sequence IPVWMYGVLVVLGWNEAMAVL. Over 743–745 the chain is Lumenal; that stretch reads FNP. A helical membrane pass occupies residues 746 to 766; the sequence is LYFAMLLVLAASGYIILQLGL. Residues 767–829 are Cytoplasmic-facing; it reads AGPILQIAST…DLIKGEMLEK (63 aa). The segment at 806–829 is disordered; that stretch reads PVTASSSDEQERKGDLIKGEMLEK. Over residues 814-829 the composition is skewed to basic and acidic residues; it reads EQERKGDLIKGEMLEK.

This sequence belongs to the TRAFAC class dynamin-like GTPase superfamily. GB1/RHD3 GTPase family. RHD3 subfamily.

It is found in the endoplasmic reticulum membrane. In terms of biological role, cooperates with the reticulon proteins and tubule-shaping DP1 family proteins to generate and maintain the structure of the tubular endoplasmic reticulum network. Has GTPase activity, which is required for its function in ER organization. In Cryptococcus neoformans var. neoformans serotype D (strain B-3501A) (Filobasidiella neoformans), this protein is Protein SEY1.